A 160-amino-acid chain; its full sequence is Secreted RxLR effector protein RXLR-C11 (160 aa).

An N-terminal signal peptide occupies residues 1–19 (MHFSLVLLVFAAIVIPICA). A RxLR-dEER motif is present at residues 58-75 (RLLRMNDKAVISDHEEER).

This sequence belongs to the RxLR effector family.

The protein resides in the secreted. It is found in the host cell membrane. Its subcellular location is the host nucleus. In terms of biological role, secreted effector that suppresses pattern-triggered immunity (PTI) in plant host. The sequence is that of Secreted RxLR effector protein RXLR-C11 from Plasmopara halstedii (Downy mildew of sunflower).